The chain runs to 158 residues: NAD(P)H-quinone oxidoreductase subunit J, chloroplastic (158 aa).

It belongs to the complex I 30 kDa subunit family. NDH is composed of at least 16 different subunits, 5 of which are encoded in the nucleus.

The protein localises to the plastid. Its subcellular location is the chloroplast thylakoid membrane. The enzyme catalyses a plastoquinone + NADH + (n+1) H(+)(in) = a plastoquinol + NAD(+) + n H(+)(out). It catalyses the reaction a plastoquinone + NADPH + (n+1) H(+)(in) = a plastoquinol + NADP(+) + n H(+)(out). Its function is as follows. NDH shuttles electrons from NAD(P)H:plastoquinone, via FMN and iron-sulfur (Fe-S) centers, to quinones in the photosynthetic chain and possibly in a chloroplast respiratory chain. The immediate electron acceptor for the enzyme in this species is believed to be plastoquinone. Couples the redox reaction to proton translocation, and thus conserves the redox energy in a proton gradient. The protein is NAD(P)H-quinone oxidoreductase subunit J, chloroplastic of Dioscorea elephantipes (Elephant's foot yam).